A 303-amino-acid polypeptide reads, in one-letter code: Diacylglycerol kinase (303 aa).

In terms of domain architecture, DAGKc spans 1-132 (MKRARIIYNP…IDIGQVNGQY (132 aa)). Residues 9–13 (NPTSG), T40, 66–72 (GDGTINE), and T93 contribute to the ATP site. Residues S213, D216, and M218 each contribute to the Mg(2+) site. The active-site Proton acceptor is the E273.

The protein belongs to the diacylglycerol/lipid kinase family. It depends on Mg(2+) as a cofactor.

The catalysed reaction is a 1,2-diacyl-sn-glycerol + ATP = a 1,2-diacyl-sn-glycero-3-phosphate + ADP + H(+). It catalyses the reaction 1,2-di-(9Z-octadecenoyl)-sn-glycerol + ATP = 1,2-di-(9Z-octadecenoyl)-sn-glycero-3-phosphate + ADP + H(+). Functionally, catalyzes the phosphorylation of diacylglycerol (DAG) into phosphatidic acid. Is a key enzyme involved in the production of lipoteichoic acid by reintroducing DAG formed from the breakdown of membrane phospholipids into the phosphatidylglycerol biosynthetic pathway. Is more active toward long-chain DAG compared with short-chain DAG. Is not able to phosphorylate substrates other than DAG, such as monoacylglycerol, ceramide, undecaprenol, phosphatidylinositol, or sphingosine. This is Diacylglycerol kinase (dagK) from Bacillus subtilis (strain 168).